The primary structure comprises 338 residues: Galactinol synthase 2 (338 aa).

The active site involves K105. D121, D123, and H258 together coordinate Mn(2+).

It belongs to the glycosyltransferase 8 family. Galactosyltransferase subfamily. A divalent metal cation is required as a cofactor.

Its subcellular location is the cytoplasm. It carries out the reaction myo-inositol + UDP-alpha-D-galactose = alpha-D-galactosyl-(1-&gt;3)-1D-myo-inositol + UDP + H(+). Galactinol synthase involved in the biosynthesis of raffinose family oligosaccharides (RFOs) that function as osmoprotectants. May promote plant stress tolerance. The protein is Galactinol synthase 2 (GOLS2) of Solanum lycopersicum (Tomato).